We begin with the raw amino-acid sequence, 103 residues long: Phosphoribosyl-ATP pyrophosphatase (103 aa).

It belongs to the PRA-PH family.

It localises to the cytoplasm. The enzyme catalyses 1-(5-phospho-beta-D-ribosyl)-ATP + H2O = 1-(5-phospho-beta-D-ribosyl)-5'-AMP + diphosphate + H(+). The protein operates within amino-acid biosynthesis; L-histidine biosynthesis; L-histidine from 5-phospho-alpha-D-ribose 1-diphosphate: step 2/9. The polypeptide is Phosphoribosyl-ATP pyrophosphatase (Cereibacter sphaeroides (strain ATCC 17029 / ATH 2.4.9) (Rhodobacter sphaeroides)).